Consider the following 184-residue polypeptide: F(420)H(2) dehydrogenase subunit B (184 aa).

The tract at residues 1-20 (MGEVKETKTNNSKENPEEEV) is disordered. [4Fe-4S] cluster-binding residues include Cys-61, Cys-62, Cys-126, and Cys-156.

It belongs to the complex I 20 kDa subunit family. The FPO complex is composed of at least 13 different subunits. FAD serves as cofactor. It depends on [4Fe-4S] cluster as a cofactor.

The protein resides in the cell inner membrane. The enzyme catalyses methanophenazine + reduced coenzyme F420-(gamma-L-Glu)(n) = dihydromethanophenazine + oxidized coenzyme F420-(gamma-L-Glu)(n) + H(+). Component of the F(420)H(2) dehydrogenase (FPO complex) which is part of the energy-conserving F(420)H(2):heterodisulfide oxidoreductase system. The membrane-bound electron transfer system of the complex plays an important role in the metabolism of methylotrophic methanogens when the organisms grow on methanol or methylamines. Catalyzes the oxidation of methanophenazine to dihydromethanophenazine. It shuttles electrons from F(420)H(2), via FAD and iron-sulfur (Fe-S) centers, to methanophenazine (an electron carrier in the membrane). It couples the redox reaction to proton translocation (for every two electrons transferred, two hydrogen ions are translocated across the cytoplasmic membrane), and thus conserves the redox energy in a proton gradient. It also catalyzes the oxidation of F(420)H(2) with quinones such as 2,3-dimethyl-1,4-naphthoquinone, 2-methyl-1,4-naphthoquinone and tetramethyl-p-benzoquinone. This is F(420)H(2) dehydrogenase subunit B (fpoB) from Methanosarcina mazei (strain ATCC BAA-159 / DSM 3647 / Goe1 / Go1 / JCM 11833 / OCM 88) (Methanosarcina frisia).